A 218-amino-acid polypeptide reads, in one-letter code: MFGSKTLFSWAAKRSKDFYRKKSKIDNFRSRAAYKLIELNSKYRFINKEDVVIDVGFAPGSWSQVAKKLVGNKGKVIGIDIQHIAPPEGVLPIYGDIRDPNTLTKLFEALRLLHEPNTNDSIDCRVVDAVISDMLHKATGIRIRDHALSMELCASALHVALTFLKSNGSFICKFYMGDEDADLQNLLKSHFRFVQVMKPKASLKESREAYFVCLERKP.

S-adenosyl-L-methionine contacts are provided by residues 59-62 (PGSW), D80, 96-97 (DI), and D133. Catalysis depends on K173, which acts as the Proton acceptor.

This sequence belongs to the class I-like SAM-binding methyltransferase superfamily. RNA methyltransferase RlmE family.

The protein resides in the mitochondrion. It catalyses the reaction a uridine in 21S rRNA + S-adenosyl-L-methionine = a 2'-O-methyluridine in 21S rRNA + S-adenosyl-L-homocysteine + H(+). Its function is as follows. S-adenosyl-L-methionine-dependent 2'-O-ribose methyltransferase that catalyzes the formation of the 2'-O-methyluridine corresponding to position 2791 in S.cerevisiae 21S mitochondrial large subunit ribosomal RNA (mtLSU rRNA), a universally conserved modification in the peptidyl transferase domain of the mtLSU rRNA. The sequence is that of rRNA methyltransferase 2, mitochondrial from Schizosaccharomyces pombe (strain 972 / ATCC 24843) (Fission yeast).